Consider the following 384-residue polypeptide: Trophoblast glycoprotein-like (384 aa).

The first 30 residues, 1-30, serve as a signal peptide directing secretion; that stretch reads MAPRAGQRGLWSPLPGLLLLAAALSRPAAP. 2 cysteine pairs are disulfide-bonded: Cys-31–Cys-37 and Cys-35–Cys-47. Residues 31 to 309 lie on the Extracellular side of the membrane; the sequence is CPFQCYCFGS…DVAGPELEAS (279 aa). LRR repeat units lie at residues 61 to 84, 95 to 118, 119 to 142, 173 to 196, and 198 to 219; these read PPDARNLTIVGANLTVLRAAAFAG, LPLLTALRLTHNNIEVVEDGAFDG, LPSLAALDLSHNPLRALGYRAFRG, LAELRLLGLVGNALSRLPLAALRL, and RLEQLDARVNALAGLGPDELSA. N-linked (GlcNAc...) asparagine glycosylation occurs at Asn-66. Disulfide bonds link Cys-240-Cys-266 and Cys-242-Cys-287. A helical transmembrane segment spans residues 310 to 330; sequence YVFFGLVLALIGLIFLMVLYL. The Cytoplasmic segment spans residues 331-384; it reads NRRGIQRWMHNLREACRDQMEGYHYRYEQDADPRRAPAPAAPAGSRATSPGSGL. A disordered region spans residues 361–384; the sequence is ADPRRAPAPAAPAGSRATSPGSGL. Residues 367–384 are compositionally biased toward low complexity; that stretch reads PAPAAPAGSRATSPGSGL.

It localises to the membrane. The polypeptide is Trophoblast glycoprotein-like (Tpbgl) (Mus musculus (Mouse)).